Here is a 432-residue protein sequence, read N- to C-terminus: Trigger factor (432 aa).

The PPIase FKBP-type domain occupies 161-246; the sequence is EDRVTIDFSG…LKKVEERELP (86 aa).

Belongs to the FKBP-type PPIase family. Tig subfamily.

Its subcellular location is the cytoplasm. The enzyme catalyses [protein]-peptidylproline (omega=180) = [protein]-peptidylproline (omega=0). In terms of biological role, involved in protein export. Acts as a chaperone by maintaining the newly synthesized protein in an open conformation. Functions as a peptidyl-prolyl cis-trans isomerase. In Enterobacter sp. (strain 638), this protein is Trigger factor.